Here is a 652-residue protein sequence, read N- to C-terminus: Coiled-coil domain-containing protein 81 (652 aa).

S206 carries the phosphoserine modification. A compositionally biased stretch (basic and acidic residues) spans K238–S256. Residues K238–K258 are disordered. Phosphoserine occurs at positions 275, 296, and 417. Positions M436–N493 form a coiled coil.

The protein resides in the cytoplasm. Its subcellular location is the cytoskeleton. It is found in the microtubule organizing center. It localises to the centrosome. This Homo sapiens (Human) protein is Coiled-coil domain-containing protein 81 (CCDC81).